The chain runs to 172 residues: Methylated-DNA--protein-cysteine methyltransferase (172 aa).

The active-site Nucleophile; methyl group acceptor is the Cys142.

Belongs to the MGMT family.

It localises to the cytoplasm. The enzyme catalyses a 6-O-methyl-2'-deoxyguanosine in DNA + L-cysteinyl-[protein] = S-methyl-L-cysteinyl-[protein] + a 2'-deoxyguanosine in DNA. It carries out the reaction a 4-O-methyl-thymidine in DNA + L-cysteinyl-[protein] = a thymidine in DNA + S-methyl-L-cysteinyl-[protein]. Functionally, involved in the cellular defense against the biological effects of O6-methylguanine (O6-MeG) and O4-methylthymine (O4-MeT) in DNA. Repairs the methylated nucleobase in DNA by stoichiometrically transferring the methyl group to a cysteine residue in the enzyme. This is a suicide reaction: the enzyme is irreversibly inactivated. In Pyrococcus abyssi (strain GE5 / Orsay), this protein is Methylated-DNA--protein-cysteine methyltransferase.